The chain runs to 254 residues: Putative hydro-lyase SACE_1553 (254 aa).

Belongs to the D-glutamate cyclase family.

This Saccharopolyspora erythraea (strain ATCC 11635 / DSM 40517 / JCM 4748 / NBRC 13426 / NCIMB 8594 / NRRL 2338) protein is Putative hydro-lyase SACE_1553.